Consider the following 428-residue polypeptide: Tyrosine--tRNA ligase (428 aa).

An L-tyrosine-binding site is contributed by Y41. A 'HIGH' region motif is present at residues 46–55 (PTADSLHLGH). The L-tyrosine site is built by Y179 and Q183. Residues 239–243 (KFGKT) carry the 'KMSKS' region motif. Residue K242 coordinates ATP. The S4 RNA-binding domain occupies 361–418 (ADLLQALVDSELQPSRGQARKTVASNAVTINGEKQADPEYVFSDSDRLFGRYTLLRRG).

The protein belongs to the class-I aminoacyl-tRNA synthetase family. TyrS type 1 subfamily. As to quaternary structure, homodimer.

The protein resides in the cytoplasm. It catalyses the reaction tRNA(Tyr) + L-tyrosine + ATP = L-tyrosyl-tRNA(Tyr) + AMP + diphosphate + H(+). In terms of biological role, catalyzes the attachment of tyrosine to tRNA(Tyr) in a two-step reaction: tyrosine is first activated by ATP to form Tyr-AMP and then transferred to the acceptor end of tRNA(Tyr). This is Tyrosine--tRNA ligase from Klebsiella pneumoniae subsp. pneumoniae (strain ATCC 700721 / MGH 78578).